A 425-amino-acid polypeptide reads, in one-letter code: UDP-N-acetylglucosamine 1-carboxyvinyltransferase (425 aa).

Residue 23 to 24 coordinates phosphoenolpyruvate; it reads KN. Arg100 serves as a coordination point for UDP-N-acetyl-alpha-D-glucosamine. Cys124 serves as the catalytic Proton donor. 2-(S-cysteinyl)pyruvic acid O-phosphothioketal is present on Cys124. UDP-N-acetyl-alpha-D-glucosamine contacts are provided by Asp313 and Ile335.

It belongs to the EPSP synthase family. MurA subfamily.

It is found in the cytoplasm. The enzyme catalyses phosphoenolpyruvate + UDP-N-acetyl-alpha-D-glucosamine = UDP-N-acetyl-3-O-(1-carboxyvinyl)-alpha-D-glucosamine + phosphate. It functions in the pathway cell wall biogenesis; peptidoglycan biosynthesis. Cell wall formation. Adds enolpyruvyl to UDP-N-acetylglucosamine. This is UDP-N-acetylglucosamine 1-carboxyvinyltransferase from Wolbachia sp. subsp. Brugia malayi (strain TRS).